The primary structure comprises 388 residues: MRYLTAGESHGPQLTTILEGVPAGLTLLAEHINKELARRQKGYGRGRRMQIEKDEVKIFSGVRHGKTLGSPITLVVENRDWKHWQNIMSIEPIDSAEEVKRKVTRPRPGHADLNGALKYGHRDMRNVLERSSARETTVRVAAGAVAKRILEELGIRVAGHVIEIGGVRAERMDYRSLEELQQVTEESPVRCFDEKAAVKMMEAIDEAKKNGDSIGGIVEVIVEGVPAGVGSHVHYDRKLDAKIAAAIVSINAFKGVEFGIGFEAARRPGSEVHDEIIWSKEKGFTRRTNRAGGFEGGMTTGMPIVVRGVMKPIPTLYKPLQSVDIETKEPFTASIERSDSCAVPAASVVAEAVVAWEVASAIVDQFGQDRMDLIKENVEKMRRYAREF.

The NADP(+) site is built by Arg-39 and Arg-45. FMN is bound by residues 130 to 132 (RSS), 251 to 252 (NA), Gly-296, 311 to 315 (KPIPT), and Arg-337.

Belongs to the chorismate synthase family. As to quaternary structure, homotetramer. FMNH2 serves as cofactor.

The enzyme catalyses 5-O-(1-carboxyvinyl)-3-phosphoshikimate = chorismate + phosphate. It participates in metabolic intermediate biosynthesis; chorismate biosynthesis; chorismate from D-erythrose 4-phosphate and phosphoenolpyruvate: step 7/7. Catalyzes the anti-1,4-elimination of the C-3 phosphate and the C-6 proR hydrogen from 5-enolpyruvylshikimate-3-phosphate (EPSP) to yield chorismate, which is the branch point compound that serves as the starting substrate for the three terminal pathways of aromatic amino acid biosynthesis. This reaction introduces a second double bond into the aromatic ring system. This Geobacillus sp. (strain WCH70) protein is Chorismate synthase.